The primary structure comprises 975 residues: Nesprin-3 (975 aa).

Topologically, residues 1 to 925 (MTQQPQDDFD…LGSLFRRACC (925 aa)) are cytoplasmic. Residues 220-325 (REHEEYQAGV…WEEEEERLRG (106 aa)) form a Spectrin 1 repeat. The stretch at 617–645 (NHQHKMDQLSSDFQALQRSLEDLVDRCRQ) forms a coiled coil. The stretch at 647–740 (VQEHCTFSHQ…RELAESWRAL (94 aa)) is one Spectrin 2 repeat. Positions 917–975 (GSLFRRACCVALPLQLLLLLFLLLLFLLPIREEDRSCTLANNFARSFTLMLRYNGPPPT) constitute a KASH domain. A helical; Anchor for type IV membrane protein transmembrane segment spans residues 926–946 (VALPLQLLLLLFLLLLFLLPI). The Perinuclear space segment spans residues 947–975 (REEDRSCTLANNFARSFTLMLRYNGPPPT).

Belongs to the nesprin family. Core component of LINC complexes which are composed of inner nuclear membrane SUN domain-containing proteins coupled to outer nuclear membrane KASH domain-containing nesprins. SUN and KASH domain-containing proteins seem to bind each other promiscuously; however, differentially expression of LINC complex constituents can give rise to specific assemblies. Interacts with SUN1 and SUN2; probably forming respective LINC complexes. Interacts with PLEC (via actin-binding domain). Interacts with DST. Interacts with SYNE1 via spectrin repeats. Interacts (via KASH domain) with TOR1A (ATP-bound); the interaction is required for SYNE3 nuclear envelope localization. The disulfid bond with SUN1 or SUN2 is required for stability of the respective LINC complex under tensile forces. As to expression, expressed in aortic endothelial cells (at protein level).

It localises to the nucleus outer membrane. The protein resides in the nucleus envelope. It is found in the rough endoplasmic reticulum. In terms of biological role, as a component of the LINC (LInker of Nucleoskeleton and Cytoskeleton) complex involved in the connection between the nuclear lamina and the cytoskeleton. The nucleocytoplasmic interactions established by the LINC complex play an important role in the transmission of mechanical forces across the nuclear envelope and in nuclear movement and positioning. Probable anchoring protein which tethers the nucleus to the cytoskeleton by binding PLEC which can associate with the intermediate filament system. Plays a role in the regulation of aortic epithelial cell morphology, and is required for flow-induced centrosome polarization and directional migration in aortic endothelial cells. In Homo sapiens (Human), this protein is Nesprin-3.